A 213-amino-acid chain; its full sequence is MOB kinase activator-like 1 homolog A (213 aa).

Residues cysteine 77, cysteine 82, histidine 159, and histidine 164 each coordinate Zn(2+).

The protein belongs to the MOB1/phocein family.

The chain is MOB kinase activator-like 1 homolog A (mobA) from Dictyostelium discoideum (Social amoeba).